Consider the following 426-residue polypeptide: Glutamyl-tRNA reductase (426 aa).

Substrate-binding positions include 49-52 (TCNR), Ser109, 114-116 (EGQ), and Gln120. Cys50 serves as the catalytic Nucleophile. Residue 189–194 (GAGETG) participates in NADP(+) binding.

It belongs to the glutamyl-tRNA reductase family. As to quaternary structure, homodimer.

The enzyme catalyses (S)-4-amino-5-oxopentanoate + tRNA(Glu) + NADP(+) = L-glutamyl-tRNA(Glu) + NADPH + H(+). It functions in the pathway porphyrin-containing compound metabolism; protoporphyrin-IX biosynthesis; 5-aminolevulinate from L-glutamyl-tRNA(Glu): step 1/2. Its pathway is porphyrin-containing compound metabolism; chlorophyll biosynthesis. Its function is as follows. Catalyzes the NADPH-dependent reduction of glutamyl-tRNA(Glu) to glutamate 1-semialdehyde (GSA). This Chlorobium chlorochromatii (strain CaD3) protein is Glutamyl-tRNA reductase.